The chain runs to 43 residues: Thymosin beta-b (43 aa).

Composition is skewed to basic and acidic residues over residues 1 to 25 (MADK…ETQE) and 33 to 43 (ETIEQEKQCEA). Positions 1–43 (MADKPDISEVSQFDKTKLKKTETQEKNTLPTKETIEQEKQCEA) are disordered.

It belongs to the thymosin beta family.

It is found in the cytoplasm. It localises to the cytoskeleton. In terms of biological role, plays an important role in the organization of the cytoskeleton. Binds to and sequesters actin monomers (G actin) and therefore inhibits actin polymerization. The polypeptide is Thymosin beta-b (Cyprinus carpio (Common carp)).